The sequence spans 686 residues: Band 4.1-like protein 4A (686 aa).

One can recognise an FERM domain in the interval Phe-11 to Glu-299. Ser-304 is modified (phosphoserine). The interval Arg-331–Thr-686 is disordered. Over residues Ala-357 to Asn-376 the composition is skewed to polar residues. A phosphoserine mark is found at Ser-389, Ser-393, and Ser-402. The segment covering Gly-418–Ser-428 has biased composition (polar residues). A compositionally biased stretch (low complexity) spans Arg-479 to Glu-489. Basic and acidic residues-rich tracts occupy residues Val-518–Gln-527 and Gln-547–Val-561. The segment covering Ile-588–Arg-601 has biased composition (basic residues). The span at Gly-648–Pro-658 shows a compositional bias: basic and acidic residues. Residues Thr-673 to Thr-686 show a composition bias toward polar residues.

In terms of tissue distribution, expressed in many tissues. High levels of expression in brain, liver, thymus and peripheral blood leukocytes and low levels of expression in heart, kidney, testis and colon.

Its subcellular location is the cytoplasm. The protein localises to the cytoskeleton. In Homo sapiens (Human), this protein is Band 4.1-like protein 4A.